Consider the following 356-residue polypeptide: MQTVLSLETSCDESAAALVKFNEGKFEILANSIASQANEHAKWGGVVPEIASRRHLESLPFLIQEVFSQSGINFSDVNAIAATVAPGLSGALLVGSVTARTLSCLHDLPFLGIHHLEGHLCSALLSENPPVPPYLVLLVSGGHTELIQVDRNFTYKRVGRSHDDAAGEAFDKVARLLGLSYPGGPAIEKFAKKGDPASFHFPKGRVSKPEGGFYPYDFSFSGLKTAVLRKVESIRSEGKQIPLANLAASFENVVSEVLVERSVKYAFDHGLHSLVMVGGVAANTCLRKMMVSKAEDKAIDVYMAPKAFCTDNAAMIGTAALVRLISGTSPSSLELGVSARFELDQSDLLYKSEPPF.

Fe cation-binding residues include H115 and H119. Residues 138-142 (LVSGG), D171, G184, and N283 each bind substrate. Position 311 (D311) interacts with Fe cation.

Belongs to the KAE1 / TsaD family. Requires Fe(2+) as cofactor.

It is found in the cytoplasm. The enzyme catalyses L-threonylcarbamoyladenylate + adenosine(37) in tRNA = N(6)-L-threonylcarbamoyladenosine(37) in tRNA + AMP + H(+). Its function is as follows. Required for the formation of a threonylcarbamoyl group on adenosine at position 37 (t(6)A37) in tRNAs that read codons beginning with adenine. Is involved in the transfer of the threonylcarbamoyl moiety of threonylcarbamoyl-AMP (TC-AMP) to the N6 group of A37, together with TsaE and TsaB. TsaD likely plays a direct catalytic role in this reaction. This is tRNA N6-adenosine threonylcarbamoyltransferase from Prochlorococcus marinus (strain SARG / CCMP1375 / SS120).